The primary structure comprises 212 residues: Thymidylate kinase (212 aa).

Glycine 13–serine 20 serves as a coordination point for ATP.

The protein belongs to the thymidylate kinase family.

It carries out the reaction dTMP + ATP = dTDP + ADP. Functionally, phosphorylation of dTMP to form dTDP in both de novo and salvage pathways of dTTP synthesis. The sequence is that of Thymidylate kinase from Legionella pneumophila (strain Corby).